The sequence spans 203 residues: ADP-ribosylation factor-like protein 6-interacting protein 1 (203 aa).

Residues 1-41 (MAEGDNRSSNLLAVETASLEEQLQGWGEVMLMADKVLRWER) lie on the Cytoplasmic side of the membrane. The chain crosses the membrane as a helical span at residues 42–62 (AWFPPAIMGVVSLLFLIIYYL). Residues 63–65 (DPS) lie on the Lumenal side of the membrane. Residues 66 to 86 (VLSGVSCFVMFLCLADYLVPI) form a helical membrane-spanning segment. Over 87–133 (LAPRIFGSNKWTTEQQQRFHEICSNLVKTRRRAVGWWKRLFSLKEEK) the chain is Cytoplasmic. A helical transmembrane segment spans residues 134-175 (PKMYFMTMIISLAAVAWVGQQVHNLLLTYLIVTFVLLLPGLN). The Lumenal segment spans residues 176–203 (QHGIILKYIGMAKREINKLLKQKEKKNE).

This sequence belongs to the ARL6ip family. In terms of assembly, homooligomer. Heterodimer with ARL6IP5. Interacts with ARL6. Interacts with TMEM33. Interacts with ATL1. In terms of tissue distribution, expressed in the cerebral cortex, cerebellum, hippocampus, olfactory bulbs, medulla oblongate and limbic system (at protein level). Ubiquitous. Expressed in all hematopoietic cell lineages, with highest levels in early myeloid progenitor cells.

It is found in the endomembrane system. The protein resides in the endoplasmic reticulum membrane. Its subcellular location is the endoplasmic reticulum. In terms of biological role, positively regulates SLC1A1/EAAC1-mediated glutamate transport by increasing its affinity for glutamate in a PKC activity-dependent manner. Promotes the catalytic efficiency of SLC1A1/EAAC1 probably by reducing its interaction with ARL6IP5, a negative regulator of SLC1A1/EAAC1-mediated glutamate transport. Plays a role in the formation and stabilization of endoplasmic reticulum tubules. Negatively regulates apoptosis, possibly by modulating the activity of caspase-9 (CASP9). Inhibits cleavage of CASP9-dependent substrates and downstream markers of apoptosis but not CASP9 itself. May be involved in protein transport, membrane trafficking, or cell signaling during hematopoietic maturation. The polypeptide is ADP-ribosylation factor-like protein 6-interacting protein 1 (Arl6ip1) (Mus musculus (Mouse)).